The primary structure comprises 150 residues: UPF0756 membrane protein YE1142 (150 aa).

Helical transmembrane passes span Met-1–Ser-21, Tyr-51–Gly-71, Ile-88–Met-108, and Val-114–Val-134.

This sequence belongs to the UPF0756 family.

The protein localises to the cell membrane. The sequence is that of UPF0756 membrane protein YE1142 from Yersinia enterocolitica serotype O:8 / biotype 1B (strain NCTC 13174 / 8081).